The sequence spans 249 residues: MNPEAVVNYLMEWSRQKVKEAGALGIVLGVSGGVDSAVAAIIAKKAFPENCMTLLLPCESDVVDRMDSQALVEKFNIPYRIIDLDNAYHLLSTQFESYLKCEGLKGKLLRGNIKSRLRMMALYYSAQARNYLVLGTSNKSELCVGYSTKYGDAGVDLQLLGDLLKREVYELAQFLGVPETIVNKPPSGGLWSGQTDEGEMGLTYEELDNYLASGDGSPEVINKIEGMMAGSQHKRKMPPVAMIPPELRN.

29–36 provides a ligand contact to ATP; sequence GVSGGVDS. Aspartate 35 is a binding site for Mg(2+). Arginine 116 provides a ligand contact to deamido-NAD(+). Threonine 136 is a binding site for ATP. Glutamate 141 contacts Mg(2+). Lysine 149 and aspartate 156 together coordinate deamido-NAD(+). ATP-binding residues include lysine 165 and serine 187. 233-234 is a binding site for deamido-NAD(+); the sequence is HK.

This sequence belongs to the NAD synthetase family. As to quaternary structure, homodimer.

It carries out the reaction deamido-NAD(+) + NH4(+) + ATP = AMP + diphosphate + NAD(+) + H(+). Its pathway is cofactor biosynthesis; NAD(+) biosynthesis; NAD(+) from deamido-NAD(+) (ammonia route): step 1/1. In terms of biological role, catalyzes the ATP-dependent amidation of deamido-NAD to form NAD. Uses ammonia as a nitrogen source. The chain is NH(3)-dependent NAD(+) synthetase from Syntrophomonas wolfei subsp. wolfei (strain DSM 2245B / Goettingen).